The sequence spans 501 residues: HMG-box protein STE11 (501 aa).

Polar residues predominate over residues 142-153; the sequence is PVNMVGSLSGSP. 2 disordered regions span residues 142–205 and 246–293; these read PVNM…KRPL and YAEM…SLEQ. The segment covering 192-204 has biased composition (low complexity); it reads SRSGSSSSGIKRP. A DNA-binding region (HMG box) is located at residues 201-265; it reads IKRPLNSFML…RHAKEYPDYK (65 aa). The span at 246-263 shows a compositional bias: basic and acidic residues; that stretch reads YAEMAQRERERHAKEYPD.

In terms of processing, phosphorylated by MAPK2.

Its subcellular location is the nucleus. The chain is HMG-box protein STE11 from Pneumocystis carinii.